We begin with the raw amino-acid sequence, 57 residues long: MKLTKFEIARILGARSLQISSGAYATIETKCDSSLKIAYEEIKQGKVPLKPIRPVKA.

It belongs to the archaeal Rpo6/eukaryotic RPB6 RNA polymerase subunit family. As to quaternary structure, part of the RNA polymerase complex.

Its subcellular location is the cytoplasm. The catalysed reaction is RNA(n) + a ribonucleoside 5'-triphosphate = RNA(n+1) + diphosphate. Functionally, DNA-dependent RNA polymerase (RNAP) catalyzes the transcription of DNA into RNA using the four ribonucleoside triphosphates as substrates. This Methanocaldococcus jannaschii (strain ATCC 43067 / DSM 2661 / JAL-1 / JCM 10045 / NBRC 100440) (Methanococcus jannaschii) protein is DNA-directed RNA polymerase subunit Rpo6.